Consider the following 274-residue polypeptide: 4-diphosphocytidyl-2-C-methyl-D-erythritol kinase (274 aa).

Lysine 7 is an active-site residue. ATP is bound at residue 90–100 (PMGGGLGGGSS). The active site involves aspartate 132.

This sequence belongs to the GHMP kinase family. IspE subfamily.

It catalyses the reaction 4-CDP-2-C-methyl-D-erythritol + ATP = 4-CDP-2-C-methyl-D-erythritol 2-phosphate + ADP + H(+). Its pathway is isoprenoid biosynthesis; isopentenyl diphosphate biosynthesis via DXP pathway; isopentenyl diphosphate from 1-deoxy-D-xylulose 5-phosphate: step 3/6. In terms of biological role, catalyzes the phosphorylation of the position 2 hydroxy group of 4-diphosphocytidyl-2C-methyl-D-erythritol. The polypeptide is 4-diphosphocytidyl-2-C-methyl-D-erythritol kinase (Dechloromonas aromatica (strain RCB)).